Consider the following 249-residue polypeptide: MTRKLVLLRHGQSQWNLDNRFTGWVDVELTDQGRQEAVAAGRLMKDEGLQFDVAHTSVLKRAIHTLQGALKELDQDWLPVSKSWRLNERHYGGLQGLDKAETAAKHGEEQVKIWRRSYDIPPPAMDVNDPGHPCHDRRYATLDRNALPGTESLATTLVRVLPYWHDAIAPQLKAGQTVLVTAHGNSLRALYKYLNDVSNEQILELNIPTGIPLLFELDDSLQVRSFRYLGDPEAAKRAAEAVANQGKAK.

Substrate is bound by residues 9-16, 22-23, Arg61, 88-91, Lys99, 115-116, and 184-185; these read RHGQSQWN, TG, ERHY, RR, and GN. His10 serves as the catalytic Tele-phosphohistidine intermediate. Glu88 functions as the Proton donor/acceptor in the catalytic mechanism.

It belongs to the phosphoglycerate mutase family. BPG-dependent PGAM subfamily. Homodimer.

The enzyme catalyses (2R)-2-phosphoglycerate = (2R)-3-phosphoglycerate. It functions in the pathway carbohydrate degradation; glycolysis; pyruvate from D-glyceraldehyde 3-phosphate: step 3/5. Functionally, catalyzes the interconversion of 2-phosphoglycerate and 3-phosphoglycerate. The chain is 2,3-bisphosphoglycerate-dependent phosphoglycerate mutase from Xanthomonas axonopodis pv. citri (strain 306).